We begin with the raw amino-acid sequence, 90 residues long: U7-theraphotoxin-Hhn1a 2 (90 aa).

An N-terminal signal peptide occupies residues 1–19 (MKIAIFTVVLALAVFAVLS). Residues 20 to 50 (FGWEANEKALSEEFTELIHEKEAASETEARE) constitute a propeptide that is removed on maturation. 3 cysteine pairs are disulfide-bonded: cysteine 51-cysteine 65, cysteine 58-cysteine 70, and cysteine 64-cysteine 81.

Belongs to the neurotoxin 10 (Hwtx-1) family. 13 (Hntx-13) subfamily. In terms of tissue distribution, expressed by the venom gland.

It is found in the secreted. In terms of biological role, ion channel inhibitor. This chain is U7-theraphotoxin-Hhn1a 2, found in Cyriopagopus hainanus (Chinese bird spider).